A 696-amino-acid chain; its full sequence is Elongation factor G (696 aa).

In terms of domain architecture, tr-type G spans 8–288 (EDYRNFGIMA…AVVEYLPSPA (281 aa)). Residues 17–24 (AHIDAGKT), 86–90 (DTPGH), and 140–143 (NKMD) contribute to the GTP site.

It belongs to the TRAFAC class translation factor GTPase superfamily. Classic translation factor GTPase family. EF-G/EF-2 subfamily.

It localises to the cytoplasm. Catalyzes the GTP-dependent ribosomal translocation step during translation elongation. During this step, the ribosome changes from the pre-translocational (PRE) to the post-translocational (POST) state as the newly formed A-site-bound peptidyl-tRNA and P-site-bound deacylated tRNA move to the P and E sites, respectively. Catalyzes the coordinated movement of the two tRNA molecules, the mRNA and conformational changes in the ribosome. This Mesorhizobium japonicum (strain LMG 29417 / CECT 9101 / MAFF 303099) (Mesorhizobium loti (strain MAFF 303099)) protein is Elongation factor G.